A 707-amino-acid chain; its full sequence is Tubulin polyglutamylase ttll-11 (707 aa).

The TTL domain maps to 124–488 (RFTIDTSRAK…PLVRDTLLLV (365 aa)). ATP-binding positions include 279 to 282 (QEYV), K293, and D295. Positions 675–707 (RNRSGTNGRKQNFTDDNNNPNSFAHLPKINERL) are disordered. A compositionally biased stretch (polar residues) spans 677 to 696 (RSGTNGRKQNFTDDNNNPNS).

It belongs to the tubulin--tyrosine ligase family. As to expression, expressed in amphid sensory neurons. Weakly expressed in body wall muscles. Isoform a: Specifically expressed in ciliated sensory neurons in the head, including the IL1s, OLQ, head CEP, and amphid neurons. In the male tail, expressed in HOA, RnA, and phasmid neurons. Isoform b: Specifically expressed in male and hermaphrodite IL2 ciliated sensory neurons, and in male-specific CEM, HOB and RnB ciliated sensory neurons.

The protein resides in the cell projection. The protein localises to the axon. It localises to the perikaryon. It is found in the dendrite. Its subcellular location is the cilium. The protein resides in the extracellular vesicle. It catalyses the reaction L-glutamyl-[protein] + L-glutamate + ATP = gamma-L-glutamyl-L-glutamyl-[protein] + ADP + phosphate + H(+). In terms of biological role, polyglutamylase which preferentially modifies tubulin. Involved in the side-chain initiation step of the polyglutamylation reaction. By controlling tubulin glutamylation, regulates ciliary specialization and motor-based transport. Promotes the formation of A and B tubule singlets by splaying microtubule doublets in cilia. Together with ttll-4 and 5, required for male mating. Functionally, specifically promotes tubulin glutamylation in a subset of ciliated neurons including amphid, phasmid, CEP and RnA neurons. Its function is as follows. Specifically promotes tubulin glutamylation in male ciliated CEM, HOB and RnB neurons that release bioactive extracellular vesicles. Regulates the localization of TRP channel pdk-2 in male CEM, HOB and RnB neurons. Regulates the environmental release of bioactive extracellular vesicles in cilia. In Caenorhabditis elegans, this protein is Tubulin polyglutamylase ttll-11.